We begin with the raw amino-acid sequence, 261 residues long: Anamorsin homolog (261 aa).

An N-terminal SAM-like domain region spans residues 4–134; sequence VQENNQVLYI…EIGSAAKLSL (131 aa). The linker stretch occupies residues 134–173; the sequence is LGGGANKAKVAAVWKLDVDDDGEAEERIDEDELLDEEDKV. [2Fe-2S] cluster-binding residues include cysteine 183, cysteine 192, cysteine 195, and cysteine 197. The segment at 183-197 is fe-S binding site A; it reads CGTTGKRKACKDCSC. [4Fe-4S] cluster-binding residues include cysteine 222, cysteine 225, cysteine 233, and cysteine 236. Short sequence motifs (cx2C motif) lie at residues 222–225 and 233–236; these read CGSC and CATC. A fe-S binding site B region spans residues 222–236; sequence CGSCYLGDAFRCATC.

Belongs to the anamorsin family. Monomer. The cofactor is [2Fe-2S] cluster. It depends on [4Fe-4S] cluster as a cofactor.

It is found in the cytoplasm. The protein localises to the mitochondrion intermembrane space. In terms of biological role, component of the cytosolic iron-sulfur (Fe-S) protein assembly (CIA) machinery. Required for the maturation of extramitochondrial Fe-S proteins. Part of an electron transfer chain functioning in an early step of cytosolic Fe-S biogenesis, facilitating the de novo assembly of a [4Fe-4S] cluster on the cytosolic Fe-S scaffold complex. Electrons are transferred from NADPH via a FAD- and FMN-containing diflavin oxidoreductase. Together with the diflavin oxidoreductase, also required for the assembly of the diferric tyrosyl radical cofactor of ribonucleotide reductase (RNR), probably by providing electrons for reduction during radical cofactor maturation in the catalytic small subunit. The chain is Anamorsin homolog from Culex quinquefasciatus (Southern house mosquito).